A 336-amino-acid polypeptide reads, in one-letter code: Aldehyde reductase AdhA (336 aa).

8 residues coordinate Zn(2+): Cys-36, Cys-39, His-61, Cys-92, Cys-95, Cys-98, Cys-106, and Cys-148.

The protein belongs to the zinc-containing alcohol dehydrogenase family. In terms of assembly, homotetramer. Requires Zn(2+) as cofactor.

The protein resides in the cytoplasm. The enzyme catalyses a primary alcohol + NADP(+) = an aldehyde + NADPH + H(+). Active on a wide variety of primary alcohols and their corresponding aldehydes, but not against ketones nor secondary alcohols. Active on aliphatic compounds up to 5 carbons in length and aromatic alcohols, less effective on branched-chain primary alcohols. Prefers NADPH to NADH. Its catalytic efficiency is greatest for aldehydes, suggesting the reduction of aromatic and medium-chain aliphatic aldehydes is its in vivo activity. Plays a role in tolerance to internally produced ethanol. The protein is Aldehyde reductase AdhA of Synechocystis sp. (strain ATCC 27184 / PCC 6803 / Kazusa).